The following is a 357-amino-acid chain: Uroporphyrinogen decarboxylase (357 aa).

Residues 30–34, Asp-79, Tyr-154, Ser-209, and His-336 contribute to the substrate site; that span reads RQAGR.

This sequence belongs to the uroporphyrinogen decarboxylase family. Homodimer.

Its subcellular location is the cytoplasm. The catalysed reaction is uroporphyrinogen III + 4 H(+) = coproporphyrinogen III + 4 CO2. It participates in porphyrin-containing compound metabolism; protoporphyrin-IX biosynthesis; coproporphyrinogen-III from 5-aminolevulinate: step 4/4. Its function is as follows. Catalyzes the decarboxylation of four acetate groups of uroporphyrinogen-III to yield coproporphyrinogen-III. The chain is Uroporphyrinogen decarboxylase from Mycobacterium leprae (strain Br4923).